A 226-amino-acid polypeptide reads, in one-letter code: Ribonuclease 3 (226 aa).

In terms of domain architecture, RNase III spans 2 to 129 (IESISKIIKY…LIGAIYLDGG (128 aa)). Glu-42 serves as a coordination point for Mg(2+). Residue Asp-46 is part of the active site. Mg(2+) is bound by residues Asn-115 and Glu-118. Residue Glu-118 is part of the active site. In terms of domain architecture, DRBM spans 154-223 (DAKTILQELV…ASLMLNQIHN (70 aa)).

The protein belongs to the ribonuclease III family. In terms of assembly, homodimer. Requires Mg(2+) as cofactor.

The protein localises to the cytoplasm. It carries out the reaction Endonucleolytic cleavage to 5'-phosphomonoester.. Its function is as follows. Digests double-stranded RNA. Involved in the processing of primary rRNA transcript to yield the immediate precursors to the large and small rRNAs (23S and 16S). Processes some mRNAs, and tRNAs when they are encoded in the rRNA operon. Processes pre-crRNA and tracrRNA of type II CRISPR loci if present in the organism. This Ehrlichia chaffeensis (strain ATCC CRL-10679 / Arkansas) protein is Ribonuclease 3.